Consider the following 314-residue polypeptide: UDP-N-acetylenolpyruvoylglucosamine reductase (314 aa).

The 167-residue stretch at 25–191 (KIGGPADLFA…VRVGMELRWG (167 aa)) folds into the FAD-binding PCMH-type domain. Arg-170 is a catalytic residue. The active-site Proton donor is the Ser-220. Residue Glu-291 is part of the active site.

It belongs to the MurB family. Requires FAD as cofactor.

The protein localises to the cytoplasm. It carries out the reaction UDP-N-acetyl-alpha-D-muramate + NADP(+) = UDP-N-acetyl-3-O-(1-carboxyvinyl)-alpha-D-glucosamine + NADPH + H(+). It functions in the pathway cell wall biogenesis; peptidoglycan biosynthesis. Its function is as follows. Cell wall formation. This chain is UDP-N-acetylenolpyruvoylglucosamine reductase, found in Heliobacterium modesticaldum (strain ATCC 51547 / Ice1).